Consider the following 570-residue polypeptide: Proline--tRNA ligase (570 aa).

The protein belongs to the class-II aminoacyl-tRNA synthetase family. ProS type 1 subfamily. Homodimer.

The protein resides in the cytoplasm. The catalysed reaction is tRNA(Pro) + L-proline + ATP = L-prolyl-tRNA(Pro) + AMP + diphosphate. Its function is as follows. Catalyzes the attachment of proline to tRNA(Pro) in a two-step reaction: proline is first activated by ATP to form Pro-AMP and then transferred to the acceptor end of tRNA(Pro). As ProRS can inadvertently accommodate and process non-cognate amino acids such as alanine and cysteine, to avoid such errors it has two additional distinct editing activities against alanine. One activity is designated as 'pretransfer' editing and involves the tRNA(Pro)-independent hydrolysis of activated Ala-AMP. The other activity is designated 'posttransfer' editing and involves deacylation of mischarged Ala-tRNA(Pro). The misacylated Cys-tRNA(Pro) is not edited by ProRS. This chain is Proline--tRNA ligase, found in Shewanella oneidensis (strain ATCC 700550 / JCM 31522 / CIP 106686 / LMG 19005 / NCIMB 14063 / MR-1).